A 357-amino-acid chain; its full sequence is Phosphoribosylformylglycinamidine cyclo-ligase (357 aa).

This sequence belongs to the AIR synthase family.

Its subcellular location is the cytoplasm. It catalyses the reaction 2-formamido-N(1)-(5-O-phospho-beta-D-ribosyl)acetamidine + ATP = 5-amino-1-(5-phospho-beta-D-ribosyl)imidazole + ADP + phosphate + H(+). The protein operates within purine metabolism; IMP biosynthesis via de novo pathway; 5-amino-1-(5-phospho-D-ribosyl)imidazole from N(2)-formyl-N(1)-(5-phospho-D-ribosyl)glycinamide: step 2/2. In Rhizobium johnstonii (strain DSM 114642 / LMG 32736 / 3841) (Rhizobium leguminosarum bv. viciae), this protein is Phosphoribosylformylglycinamidine cyclo-ligase.